Reading from the N-terminus, the 686-residue chain is Translation initiation factor IF-2 (686 aa).

The interval 53-105 is disordered; that stretch reads EKPSVADEFEVEEKVVRSKKNSNKKKKKGKGNEDKRQENFAGRQQTQTVETPD. Basic residues predominate over residues 69–81; the sequence is RSKKNSNKKKKKG. In terms of domain architecture, tr-type G spans 188–357; that stretch reads ERPAVVTIMG…LLVSEVEEYK (170 aa). Residues 197-204 are G1; the sequence is GHVDHGKT. 197 to 204 is a binding site for GTP; sequence GHVDHGKT. Residues 222 to 226 form a G2 region; that stretch reads GITQH. The tract at residues 243–246 is G3; the sequence is DTPG. Residues 243 to 247 and 297 to 300 contribute to the GTP site; these read DTPGH and NKMD. A G4 region spans residues 297–300; that stretch reads NKMD. The segment at 333-335 is G5; sequence SAI.

It belongs to the TRAFAC class translation factor GTPase superfamily. Classic translation factor GTPase family. IF-2 subfamily.

Its subcellular location is the cytoplasm. Functionally, one of the essential components for the initiation of protein synthesis. Protects formylmethionyl-tRNA from spontaneous hydrolysis and promotes its binding to the 30S ribosomal subunits. Also involved in the hydrolysis of GTP during the formation of the 70S ribosomal complex. The sequence is that of Translation initiation factor IF-2 from Bacillus cereus (strain ATCC 10987 / NRS 248).